The chain runs to 261 residues: X-box-binding protein 1 (261 aa).

Over 1–185 (MVVVAAAPNP…VQAQLSPLQN (185 aa)) the chain is Cytoplasmic. The interval 44-93 (RGASPEAASGGLPQARKRQRLTHLSPEEKALRRKLKNRVAAQTARDRKKA) is disordered. A phosphoserine mark is found at Ser-47 and Ser-68. The bZIP domain occupies 70–133 (EEKALRRKLK…HGLVVENQEL (64 aa)). The tract at residues 72–94 (KALRRKLKNRVAAQTARDRKKAR) is basic motif. The segment at 75 to 92 (RRKLKNRVAAQTARDRKK) is nuclear localization signal (NLS); in isoforms 1 and isoform 2. The tract at residues 98–133 (LEQQVVDLEEENQKLLLENQLLREKTHGLVVENQEL) is leucine-zipper. Residues 186-203 (ISPWILAVLTLQIQSLIS) traverse the membrane as a helical; Signal-anchor for type II membrane protein segment. At 204-261 (CWAFWTTWTQSCSSNALPQSLPAWRSSQRSTQKDPVPYQPPFLCQWGRHQPSWKPLMN) the chain is on the lumenal side. The segment at 235-261 (QKDPVPYQPPFLCQWGRHQPSWKPLMN) is necessary for the translational pausing of its own mRNA.

The protein belongs to the bZIP family. In terms of assembly, isoform 2 interacts with SIRT1. Isoform 2 interacts with PIK3R1 and PIK3R2; the interactions are direct and induce translocation of XBP1 isoform 2 into the nucleus and the unfolded protein response (UPR) XBP1-dependent target genes activation in a ER stress- and/or insulin-dependent but PI3K-independent manner. Isoform 2 interacts with FOXO1; the interaction is direct and leads to FOXO1 ubiquitination and degradation via the proteasome pathway in hepatocytes. Isoform 1 interacts with HM13. Isoform 1 interacts with RNF139; the interaction induces ubiquitination and degradation of isoform 1. Isoform 1 interacts (via luminal domain) with DERL1; the interaction obviates the need for ectodomain shedding prior HM13/SPP-mediated XBP1 isoform 1 cleavage. Isoform 1 interacts with isoform 2; the interaction sequesters isoform 2 from the nucleus and enhances isoform 2 degradation in the cytoplasm. Isoform 1 interacts with HDAC3 and AKT1; the interactions occur in endothelial cell (EC) under disturbed flow. Isoform 1 interacts with the oncoprotein FOS. Isoform 2 interacts with ATF6; the interaction occurs in a ER stress-dependent manner and is required for DNA binding to the unfolded protein response element (UPRE). Isoform 2 interacts with PIK3R1; the interaction is direct and induces translocation of XBP1 isoform 2 into the nucleus and the unfolded protein response (UPR) XBP1-dependent target genes activation in a ER stress- and/or insulin-dependent but PI3K-independent manner. Post-translationally, acetylated by EP300; acetylation positively regulates the transcriptional activity of XBP1 isoform 2. Isoform 2 is deacetylated by SIRT1; deacetylation negatively regulates the transcriptional activity of XBP1 isoform 2. In terms of processing, ubiquitinated, leading to proteasome-mediated degradation in response to ER stress. X-box-binding protein 1, cytoplasmic form and luminal form are produced by intramembrane proteolytic cleavage of ER membrane-anchored isoform 1 triggered by HM13/SPP in a DERL1-RNF139-dependent and VCP/p97-independent manner. X-box-binding protein 1, luminal form is ubiquitinated leading to proteasomal degradation. Expressed in plasma cells in rheumatoid synovium. Over-expressed in primary breast cancer and metastatic breast cancer cells. Isoform 1 and isoform 2 are expressed at higher level in proliferating as compared to confluent quiescent endothelial cells.

It is found in the endoplasmic reticulum. The protein resides in the nucleus. It localises to the cytoplasm. The protein localises to the endoplasmic reticulum membrane. Its subcellular location is the membrane. In terms of biological role, functions as a transcription factor during endoplasmic reticulum (ER) stress by regulating the unfolded protein response (UPR). Required for cardiac myogenesis and hepatogenesis during embryonic development, and the development of secretory tissues such as exocrine pancreas and salivary gland. Involved in terminal differentiation of B lymphocytes to plasma cells and production of immunoglobulins. Modulates the cellular response to ER stress in a PIK3R-dependent manner. Binds to the cis-acting X box present in the promoter regions of major histocompatibility complex class II genes. Involved in VEGF-induced endothelial cell (EC) proliferation and retinal blood vessel formation during embryonic development but also for angiogenesis in adult tissues under ischemic conditions. Also functions as a major regulator of the UPR in obesity-induced insulin resistance and type 2 diabetes for the management of obesity and diabetes prevention. Its function is as follows. Plays a role in the unconventional cytoplasmic splicing processing of its own mRNA triggered by the endoplasmic reticulum (ER) transmembrane endoribonuclease ERN1: upon ER stress, the emerging XBP1 polypeptide chain, as part of a mRNA-ribosome-nascent chain (R-RNC) complex, cotranslationally recruits its own unprocessed mRNA through transient docking to the ER membrane and translational pausing, therefore facilitating efficient IRE1-mediated XBP1 mRNA isoform 2 production. In endothelial cells (EC), associated with KDR, promotes IRE1-mediated XBP1 mRNA isoform 2 productions in a vascular endothelial growth factor (VEGF)-dependent manner, leading to EC proliferation and angiogenesis. Functions as a negative feed-back regulator of the potent transcription factor XBP1 isoform 2 protein levels through proteasome-mediated degradation, thus preventing the constitutive activation of the ER stress response signaling pathway. Inhibits the transactivation activity of XBP1 isoform 2 in myeloma cells. Acts as a weak transcriptional factor. Together with HDAC3, contributes to the activation of NFE2L2-mediated HMOX1 transcription factor gene expression in a PI(3)K/mTORC2/Akt-dependent signaling pathway leading to EC survival under disturbed flow/oxidative stress. Binds to the ER stress response element (ERSE) upon ER stress. Binds to the consensus 5'-GATGACGTG[TG]N(3)[AT]T-3' sequence related to cAMP responsive element (CRE)-like sequences. Binds the Tax-responsive element (TRE) present in the long terminal repeat (LTR) of T-cell leukemia virus type 1 (HTLV-I) and to the TPA response elements (TRE). Associates preferentially to the HDAC3 gene promoter region in a static flow-dependent manner. Binds to the CDH5/VE-cadherin gene promoter region. Functions as a stress-inducible potent transcriptional activator during endoplasmic reticulum (ER) stress by inducing unfolded protein response (UPR) target genes via binding to the UPR element (UPRE). Up-regulates target genes encoding ER chaperones and ER-associated degradation (ERAD) components to enhance the capacity of productive folding and degradation mechanism, respectively, in order to maintain the homeostasis of the ER under ER stress. Plays a role in the production of immunoglobulins and interleukin-6 in the presence of stimuli required for plasma cell differentiation. Induces phospholipid biosynthesis and ER expansion. Contributes to the VEGF-induced endothelial cell (EC) growth and proliferation in a Akt/GSK-dependent and/or -independent signaling pathway, respectively, leading to beta-catenin nuclear translocation and E2F2 gene expression. Promotes umbilical vein EC apoptosis and atherosclerotisis development in a caspase-dependent signaling pathway, and contributes to VEGF-induced EC proliferation and angiogenesis in adult tissues under ischemic conditions. Involved in the regulation of endostatin-induced autophagy in EC through BECN1 transcriptional activation. Plays a role as an oncogene by promoting tumor progression: stimulates zinc finger protein SNAI1 transcription to induce epithelial-to-mesenchymal (EMT) transition, cell migration and invasion of breast cancer cells. Involved in adipocyte differentiation by regulating lipogenic gene expression during lactation. Plays a role in the survival of both dopaminergic neurons of the substantia nigra pars compacta (SNpc), by maintaining protein homeostasis and of myeloma cells. Increases insulin sensitivity in the liver as a response to a high carbohydrate diet, resulting in improved glucose tolerance. Also improves glucose homeostasis in an ER stress- and/or insulin-independent manner through both binding and proteasome-induced degradation of the transcription factor FOXO1, hence resulting in suppression of gluconeogenic genes expression and in a reduction of blood glucose levels. Controls the induction of de novo fatty acid synthesis in hepatocytes by regulating the expression of a subset of lipogenic genes in an ER stress- and UPR-independent manner. Associates preferentially to the HDAC3 gene promoter region in a disturbed flow-dependent manner. Binds to the BECN1 gene promoter region. Binds to the CDH5/VE-cadherin gene promoter region. Binds to the ER stress response element (ERSE) upon ER stress. Binds to the 5'-CCACG-3' motif in the PPARG promoter. In Homo sapiens (Human), this protein is X-box-binding protein 1.